The primary structure comprises 200 residues: 3-isopropylmalate dehydratase small subunit (200 aa).

Belongs to the LeuD family. LeuD type 1 subfamily. In terms of assembly, heterodimer of LeuC and LeuD.

It carries out the reaction (2R,3S)-3-isopropylmalate = (2S)-2-isopropylmalate. Its pathway is amino-acid biosynthesis; L-leucine biosynthesis; L-leucine from 3-methyl-2-oxobutanoate: step 2/4. In terms of biological role, catalyzes the isomerization between 2-isopropylmalate and 3-isopropylmalate, via the formation of 2-isopropylmaleate. This is 3-isopropylmalate dehydratase small subunit from Saccharopolyspora erythraea (strain ATCC 11635 / DSM 40517 / JCM 4748 / NBRC 13426 / NCIMB 8594 / NRRL 2338).